The primary structure comprises 71 residues: V-type proton ATPase subunit e (71 aa).

Topologically, residues 1-2 (MS) are lumenal. A helical membrane pass occupies residues 3–23 (FFHVVFVAFVIAAIGAAGWFV). At 24-35 (TPKGKNQTLLRT) the chain is on the cytoplasmic side. The chain crosses the membrane as a helical span at residues 36–56 (SLLLTLTCCYLMWAITYLCQL). Over 57–71 (HPLITPRRSDLRMEY) the chain is Lumenal.

Belongs to the V-ATPase e1/e2 subunit family. As to quaternary structure, V-ATPase is a heteromultimeric enzyme composed of a peripheral catalytic V1 complex (components A to H) attached to an integral membrane V0 proton pore complex (components: a, c, c', c'', d, e, f and VOA1).

The protein localises to the vacuole membrane. Functionally, subunit of the V0 complex of vacuolar(H+)-ATPase (V-ATPase), a multisubunit enzyme composed of a peripheral complex (V1) that hydrolyzes ATP and a membrane integral complex (V0) that translocates protons. V-ATPase is responsible for acidifying and maintaining the pH of intracellular compartments. The sequence is that of V-type proton ATPase subunit e (VMA9) from Cryptococcus neoformans var. neoformans serotype D (strain JEC21 / ATCC MYA-565) (Filobasidiella neoformans).